The following is a 433-amino-acid chain: Enolase (433 aa).

Gln-167 contributes to the (2R)-2-phosphoglycerate binding site. Glu-209 (proton donor) is an active-site residue. Mg(2+)-binding residues include Asp-246, Glu-287, and Asp-314. Residues Lys-339, Arg-368, Ser-369, and Lys-390 each contribute to the (2R)-2-phosphoglycerate site. Catalysis depends on Lys-339, which acts as the Proton acceptor.

The protein belongs to the enolase family. Mg(2+) serves as cofactor.

It localises to the cytoplasm. Its subcellular location is the secreted. It is found in the cell surface. The enzyme catalyses (2R)-2-phosphoglycerate = phosphoenolpyruvate + H2O. The protein operates within carbohydrate degradation; glycolysis; pyruvate from D-glyceraldehyde 3-phosphate: step 4/5. In terms of biological role, catalyzes the reversible conversion of 2-phosphoglycerate (2-PG) into phosphoenolpyruvate (PEP). It is essential for the degradation of carbohydrates via glycolysis. In Prochlorococcus marinus (strain NATL2A), this protein is Enolase.